Consider the following 143-residue polypeptide: MAIERTFSIIKPDAVAKNHIGAIYNRFETAGLKIVAAKMLHLTKEQAEGFYAEHSERGFFGALVAFMTSGPIMVQVLEGENAVLAHREILGATNPAQAAPGTIRADFAESIDENAAHGSDAVESAAREIAYFFSAEELCPRTR.

Residues K11, F59, R87, T93, R104, and N114 each coordinate ATP. H117 serves as the catalytic Pros-phosphohistidine intermediate.

It belongs to the NDK family. As to quaternary structure, homotetramer. The cofactor is Mg(2+).

The protein localises to the cytoplasm. It catalyses the reaction a 2'-deoxyribonucleoside 5'-diphosphate + ATP = a 2'-deoxyribonucleoside 5'-triphosphate + ADP. It carries out the reaction a ribonucleoside 5'-diphosphate + ATP = a ribonucleoside 5'-triphosphate + ADP. In terms of biological role, major role in the synthesis of nucleoside triphosphates other than ATP. The ATP gamma phosphate is transferred to the NDP beta phosphate via a ping-pong mechanism, using a phosphorylated active-site intermediate. The protein is Nucleoside diphosphate kinase of Shewanella sp. (strain W3-18-1).